A 541-amino-acid chain; its full sequence is 5' exonuclease Apollo (541 aa).

A Glycyl lysine isopeptide (Lys-Gly) (interchain with G-Cter in SUMO2) cross-link involves residue K334. Disordered regions lie at residues T350 to K375 and I450 to L489. The segment covering P358–S371 has biased composition (basic and acidic residues). Positions E492–F507 match the TBM motif.

The protein belongs to the DNA repair metallo-beta-lactamase (DRMBL) family. Interacts with TERF2; the interaction is direct. Interacts with MUS81, MRE11 and FANCD2. Interacts with HSPA2, HSPA8 and HSPA14. Interacts with SPAG5. Post-translationally, ubiquitinated, leading to its degradation. Interaction with TERF2 protects it from ubiquitination.

The protein resides in the chromosome. It localises to the telomere. It is found in the nucleus. The protein localises to the cytoplasm. Its subcellular location is the cytoskeleton. The protein resides in the microtubule organizing center. It localises to the centrosome. The catalysed reaction is a beta-lactam + H2O = a substituted beta-amino acid. Functionally, 5'-3' exonuclease that plays a central role in telomere maintenance and protection during S-phase. Participates in the protection of telomeres against non-homologous end-joining (NHEJ)-mediated repair, thereby ensuring that telomeres do not fuse. Plays a key role in telomeric loop (T loop) formation by being recruited by TERF2 at the leading end telomeres and by processing leading-end telomeres immediately after their replication via its exonuclease activity: generates 3' single-stranded overhang at the leading end telomeres avoiding blunt leading-end telomeres that are vulnerable to end-joining reactions and expose the telomere end in a manner that activates the DNA repair pathways. Together with TERF2, required to protect telomeres from replicative damage during replication by controlling the amount of DNA topoisomerase (TOP1, TOP2A and TOP2B) needed for telomere replication during fork passage and prevent aberrant telomere topology. Also involved in response to DNA damage: plays a role in response to DNA interstrand cross-links (ICLs) by facilitating double-strand break formation. In case of spindle stress, involved in prophase checkpoint. Possesses beta-lactamase activity, catalyzing the hydrolysis of penicillin G and nitrocefin. Exhibits no activity towards other beta-lactam antibiotic classes including cephalosporins (cefotaxime) and carbapenems (imipenem). This is 5' exonuclease Apollo (Dclre1b) from Rattus norvegicus (Rat).